Here is a 512-residue protein sequence, read N- to C-terminus: ETS translocation variant 3 (512 aa).

Residues 35 to 116 (IQLWHFILEL…KGKRFTYKFN (82 aa)) constitute a DNA-binding region (ETS). The tract at residues 136-222 (VPQSAPPVPT…NAIGGGGIGH (87 aa)) is disordered. S139, S159, and S315 each carry phosphoserine. Over residues 158 to 184 (HSPTNDVQPGRFSASSLTASGQESSNG) the composition is skewed to polar residues. Residues 336–512 (PEESTQFSIK…QGLATAAADA (177 aa)) are disordered. Positions 380–406 (IKVEPASEKDPESLRQSAREKEEHTQE) are enriched in basic and acidic residues. K381 is covalently cross-linked (Glycyl lysine isopeptide (Lys-Gly) (interchain with G-Cter in SUMO2)). K388 is subject to N6-acetyllysine; alternate. K388 is covalently cross-linked (Glycyl lysine isopeptide (Lys-Gly) (interchain with G-Cter in SUMO2); alternate). Residues 443–452 (EPLEVTEDIE) show a composition bias toward acidic residues. Basic and acidic residues-rich tracts occupy residues 453 to 468 (DRPG…KEDA) and 479 to 491 (RWND…ELSK).

The protein belongs to the ETS family.

The protein resides in the nucleus. Functionally, transcriptional repressor that contribute to growth arrest during terminal macrophage differentiation by repressing target genes involved in Ras-dependent proliferation. Represses MMP1 promoter activity. This is ETS translocation variant 3 (ETV3) from Pan paniscus (Pygmy chimpanzee).